Here is a 185-residue protein sequence, read N- to C-terminus: Probable chorismate pyruvate-lyase (185 aa).

Positions 75, 113, and 174 each coordinate substrate.

The protein belongs to the UbiC family.

It is found in the cytoplasm. The enzyme catalyses chorismate = 4-hydroxybenzoate + pyruvate. The protein operates within cofactor biosynthesis; ubiquinone biosynthesis. In terms of biological role, removes the pyruvyl group from chorismate, with concomitant aromatization of the ring, to provide 4-hydroxybenzoate (4HB) for the ubiquinone pathway. This is Probable chorismate pyruvate-lyase from Aromatoleum aromaticum (strain DSM 19018 / LMG 30748 / EbN1) (Azoarcus sp. (strain EbN1)).